We begin with the raw amino-acid sequence, 190 residues long: Threonylcarbamoyl-AMP synthase (190 aa).

A YrdC-like domain is found at 7–190 (SEAVAHAVAV…ALTGELFRQG (184 aa)).

This sequence belongs to the SUA5 family. TsaC subfamily.

The protein resides in the cytoplasm. It catalyses the reaction L-threonine + hydrogencarbonate + ATP = L-threonylcarbamoyladenylate + diphosphate + H2O. Functionally, required for the formation of a threonylcarbamoyl group on adenosine at position 37 (t(6)A37) in tRNAs that read codons beginning with adenine. Catalyzes the conversion of L-threonine, HCO(3)(-)/CO(2) and ATP to give threonylcarbamoyl-AMP (TC-AMP) as the acyladenylate intermediate, with the release of diphosphate. This chain is Threonylcarbamoyl-AMP synthase, found in Klebsiella pneumoniae subsp. pneumoniae (strain ATCC 700721 / MGH 78578).